Reading from the N-terminus, the 502-residue chain is Cytochrome P450 2J3 (502 aa).

Residue cysteine 448 participates in heme binding.

Belongs to the cytochrome P450 family. Requires heme as cofactor. As to expression, abundantly expressed in heart and liver.

It localises to the endoplasmic reticulum membrane. The protein localises to the microsome membrane. The enzyme catalyses an organic molecule + reduced [NADPH--hemoprotein reductase] + O2 = an alcohol + oxidized [NADPH--hemoprotein reductase] + H2O + H(+). This enzyme metabolizes arachidonic acid predominantly via a NADPH-dependent olefin epoxidation mainly to 14,15-, 11,12-, and 8,9-epoxyeicosatrienoic acids (EET). It also acts as an omega-1-hydroxylase by metabolizing arachidonic acid to 19-hydroxyeicosatetraenoic acid (19-OH-AA). The protein is Cytochrome P450 2J3 (Cyp2j3) of Rattus norvegicus (Rat).